Here is a 90-residue protein sequence, read N- to C-terminus: Exodeoxyribonuclease 7 small subunit (90 aa).

The disordered stretch occupies residues 62–90; sequence QDGQANPMSSQGHTAGEYPDDEAEEAEEA. A compositionally biased stretch (polar residues) spans 64–74; it reads GQANPMSSQGH. Positions 79–90 are enriched in acidic residues; the sequence is YPDDEAEEAEEA.

The protein belongs to the XseB family. In terms of assembly, heterooligomer composed of large and small subunits.

The protein localises to the cytoplasm. It catalyses the reaction Exonucleolytic cleavage in either 5'- to 3'- or 3'- to 5'-direction to yield nucleoside 5'-phosphates.. Its function is as follows. Bidirectionally degrades single-stranded DNA into large acid-insoluble oligonucleotides, which are then degraded further into small acid-soluble oligonucleotides. The protein is Exodeoxyribonuclease 7 small subunit of Desulfovibrio desulfuricans (strain ATCC 27774 / DSM 6949 / MB).